The chain runs to 778 residues: Probable potassium transporter 13 (778 aa).

At Met-1–Leu-28 the chain is on the cytoplasmic side. A helical transmembrane segment spans residues Leu-29 to Val-49. The Extracellular portion of the chain corresponds to Tyr-50–Ser-72. A helical transmembrane segment spans residues Leu-73–Ala-93. The Cytoplasmic segment spans residues Asp-94–Arg-156. The chain crosses the membrane as a helical span at residues Val-157–Thr-177. At Pro-178 to Asn-199 the chain is on the extracellular side. Asn-199 is a glycosylation site (N-linked (GlcNAc...) asparagine). The chain crosses the membrane as a helical span at residues Tyr-200–Thr-220. Residues Arg-221–Arg-222 are Cytoplasmic-facing. A helical membrane pass occupies residues Val-223–Ile-243. Over Tyr-244 to Ser-276 the chain is Extracellular. The helical transmembrane segment at Leu-277 to Phe-297 threads the bilayer. Residues Ser-298–Arg-303 are Cytoplasmic-facing. A helical membrane pass occupies residues Leu-304–Tyr-324. Over Leu-325–Arg-343 the chain is Extracellular. Residues Val-344–Ile-364 form a helical membrane-spanning segment. Residues Ser-365–Gln-395 are Cytoplasmic-facing. The helical transmembrane segment at Ile-396–Phe-416 threads the bilayer. At Arg-417–Asn-424 the chain is on the extracellular side. A helical transmembrane segment spans residues Ala-425 to Ile-445. The Cytoplasmic portion of the chain corresponds to Thr-446–Arg-451. Residues Trp-452 to Ser-472 traverse the membrane as a helical segment. The Extracellular segment spans residues Ala-473–Lys-477. The chain crosses the membrane as a helical span at residues Val-478–Thr-498. The Cytoplasmic portion of the chain corresponds to Trp-499–Val-778. The span at Pro-655–Cys-677 shows a compositional bias: polar residues. Residues Pro-655–Glu-704 form a disordered region.

Belongs to the HAK/KUP transporter (TC 2.A.72.3) family.

The protein resides in the membrane. High-affinity potassium transporter. This is Probable potassium transporter 13 (HAK13) from Oryza sativa subsp. japonica (Rice).